A 382-amino-acid chain; its full sequence is tRNA (guanine(37)-N(1))-methyltransferase (382 aa).

Residues His-205, 243 to 244 (DL), 269 to 270 (DA), and Asn-291 each bind S-adenosyl-L-methionine.

This sequence belongs to the class I-like SAM-binding methyltransferase superfamily. TRM5/TYW2 family. Monomer.

Its subcellular location is the mitochondrion matrix. The protein resides in the nucleus. The protein localises to the cytoplasm. It carries out the reaction guanosine(37) in tRNA + S-adenosyl-L-methionine = N(1)-methylguanosine(37) in tRNA + S-adenosyl-L-homocysteine + H(+). Its function is as follows. Specifically methylates the N1 position of guanosine-37 in various cytoplasmic and mitochondrial tRNAs. Methylation is not dependent on the nature of the nucleoside 5' of the target nucleoside. This is the first step in the biosynthesis of wybutosine (yW), a modified base adjacent to the anticodon of tRNAs and required for accurate decoding. This is tRNA (guanine(37)-N(1))-methyltransferase from Entamoeba histolytica (strain ATCC 30459 / HM-1:IMSS / ABRM).